Reading from the N-terminus, the 184-residue chain is MDQSELVEAVSEAGGAAVAPVDLRKELEEFLKRLNIETTCIEHPEVFTVEEMMPHVSHLSGVVTKNLFLKDKKRRVFLVCVRHDRPLALGELSRRLGAPNLRLAEERLLLEKLRVRQGCVTPLALFLDTERSVTAVLDRELTHGGHTHIHCHPMTNSATMGITPADLLRFLEETQHTPVILSFD.

This sequence belongs to the PRORSD1 family.

The polypeptide is Prolyl-tRNA synthetase associated domain-containing protein 1 (Prorsd1) (Danio rerio (Zebrafish)).